The following is a 460-amino-acid chain: L-seryl-tRNA(Sec) selenium transferase (460 aa).

At Lys293 the chain carries N6-(pyridoxal phosphate)lysine.

It belongs to the SelA family. Requires pyridoxal 5'-phosphate as cofactor.

The protein resides in the cytoplasm. The catalysed reaction is L-seryl-tRNA(Sec) + selenophosphate + H(+) = L-selenocysteinyl-tRNA(Sec) + phosphate. Its pathway is aminoacyl-tRNA biosynthesis; selenocysteinyl-tRNA(Sec) biosynthesis; selenocysteinyl-tRNA(Sec) from L-seryl-tRNA(Sec) (bacterial route): step 1/1. Functionally, converts seryl-tRNA(Sec) to selenocysteinyl-tRNA(Sec) required for selenoprotein biosynthesis. The protein is L-seryl-tRNA(Sec) selenium transferase of Pasteurella multocida (strain Pm70).